Reading from the N-terminus, the 107-residue chain is Prepilin peptidase-dependent protein C (107 aa).

Positions 1–10 are excised as a propeptide; it reads MSASLKNQQG. Residue Phe-11 is modified to N-methylphenylalanine. The chain crosses the membrane as a helical span at residues 11–30; that stretch reads FSLPEVMLAMVLMVMIVTAL.

It localises to the membrane. Not yet known. The sequence is that of Prepilin peptidase-dependent protein C (ppdC) from Escherichia coli (strain K12).